A 504-amino-acid chain; its full sequence is Maturase K (504 aa).

This sequence belongs to the intron maturase 2 family. MatK subfamily.

It is found in the plastid. Its subcellular location is the chloroplast. Its function is as follows. Usually encoded in the trnK tRNA gene intron. Probably assists in splicing its own and other chloroplast group II introns. In Lepidium virginicum (Virginia pepperweed), this protein is Maturase K.